We begin with the raw amino-acid sequence, 605 residues long: DNA primase (605 aa).

The CHC2-type zinc finger occupies 38–62 (CPFHDEKTPSFTVSEDKQICHCFGC). The Toprim domain occupies 260-341 (DEIVLLEGFM…NVFVIQLPSG (82 aa)). Glutamate 266, aspartate 310, and aspartate 312 together coordinate Mg(2+).

This sequence belongs to the DnaG primase family. Monomer. Interacts with DnaB. Zn(2+) is required as a cofactor. It depends on Mg(2+) as a cofactor.

The enzyme catalyses ssDNA + n NTP = ssDNA/pppN(pN)n-1 hybrid + (n-1) diphosphate.. RNA polymerase that catalyzes the synthesis of short RNA molecules used as primers for DNA polymerase during DNA replication. The polypeptide is DNA primase (Staphylococcus aureus (strain MW2)).